The chain runs to 303 residues: Di/tripeptide transport system permease protein DppC (303 aa).

The next 7 membrane-spanning stretches (helical) occupy residues 33 to 53 (ALGGLLFMLLIVFCALFAPWV), 103 to 123 (LLIGLSSVVISLIPGILLGLL), 131 to 151 (AGPLIMRLMDIMLALPSLLLA), 152 to 172 (VAIVAILGPGLINTVIAIAIV), 202 to 222 (AGTLRLMFVCVLPNCMAPLIV), 225 to 245 (TLSFSSAILDAAALGFLGLGV), and 267 to 287 (WWVVSLPGLTILLSVLAINLM). Residues 99–288 (ARLSLLIGLS…LSVLAINLMG (190 aa)) enclose the ABC transmembrane type-1 domain.

The protein belongs to the binding-protein-dependent transport system permease family. OppBC subfamily. The complex is composed of two ATP-binding proteins (DppD and DppF), two transmembrane proteins (DppB and DppC) and a solute-binding protein (DppA1-A5). Five orthologous SBPs (DppA1-A5) are present in P.aeruginosa, which increases the substrate specificity of the DppBCDF transporter.

The protein localises to the cell inner membrane. Functionally, part of the ABC transporter DppABCDF involved in the uptake of various di/tripeptides. Is also involved in the uptake of phaseolotoxin, a toxic tripeptide inhibiting the enzyme ornithine carbamoyltransferase. Responsible for the translocation of the substrate across the membrane. This is Di/tripeptide transport system permease protein DppC from Pseudomonas aeruginosa (strain UCBPP-PA14).